Here is a 353-residue protein sequence, read N- to C-terminus: Protein MGF 360-9L (353 aa).

Belongs to the asfivirus MGF 360 family. As to quaternary structure, interacts with host STAT1; this interaction mediates STAT1 degradation through apoptosis. Interacts with host STAT2; this interaction mediates STAT2 degradation through the proteasome.

Its subcellular location is the host cytoplasm. Plays a role in virus cell tropism, and may be required for efficient virus replication in macrophages. In addition, inhibits IFN-beta-induced IFN-stimulated genes (ISGs) transcription. Mechanistically, degrades host STAT1 and STAT2 through apoptosis and ubiquitin-proteasome pathways respectively. The chain is Protein MGF 360-9L from African swine fever virus (isolate Tick/Malawi/Lil 20-1/1983) (ASFV).